The following is a 132-amino-acid chain: Phosphoribosyl-AMP cyclohydrolase (132 aa).

Residue D81 coordinates Mg(2+). C82 contacts Zn(2+). D83 and D85 together coordinate Mg(2+). Zn(2+)-binding residues include C99 and C106.

The protein belongs to the PRA-CH family. In terms of assembly, homodimer. Requires Mg(2+) as cofactor. Zn(2+) is required as a cofactor.

It is found in the cytoplasm. The catalysed reaction is 1-(5-phospho-beta-D-ribosyl)-5'-AMP + H2O = 1-(5-phospho-beta-D-ribosyl)-5-[(5-phospho-beta-D-ribosylamino)methylideneamino]imidazole-4-carboxamide. It participates in amino-acid biosynthesis; L-histidine biosynthesis; L-histidine from 5-phospho-alpha-D-ribose 1-diphosphate: step 3/9. In terms of biological role, catalyzes the hydrolysis of the adenine ring of phosphoribosyl-AMP. The polypeptide is Phosphoribosyl-AMP cyclohydrolase (Chromobacterium violaceum (strain ATCC 12472 / DSM 30191 / JCM 1249 / CCUG 213 / NBRC 12614 / NCIMB 9131 / NCTC 9757 / MK)).